We begin with the raw amino-acid sequence, 142 residues long: MKTFTAKPSNIKREWLLIDATDKTLGRLATEVAMILRGKNKPEYTPHMDTGDYVVIVNAEKVAVTGNKRKAKTYYHHTGYIGGIKSVSFEKLIATHPERAIEKAVRGMLPRTPLGRTMFKKLKVYAGEAHPHTAQQPKAHNI.

Belongs to the universal ribosomal protein uL13 family. Part of the 50S ribosomal subunit.

Its function is as follows. This protein is one of the early assembly proteins of the 50S ribosomal subunit, although it is not seen to bind rRNA by itself. It is important during the early stages of 50S assembly. The chain is Large ribosomal subunit protein uL13 from Francisella tularensis subsp. mediasiatica (strain FSC147).